A 175-amino-acid chain; its full sequence is Protein OPG036 (175 aa).

The protein belongs to the poxviridae OPG036 family.

It is found in the host nucleus. Its function is as follows. Plays a role in the inhibition of host innate immune response. Within the host nucleus, inhibits activation of interferon-beta promoter by inhibiting IRF3 activation. The protein is Protein OPG036 (OPG036) of Homo sapiens (Human).